The sequence spans 259 residues: 7alpha-hydroxysteroid dehydrogenase (259 aa).

NAD(+) contacts are provided by residues isoleucine 18, aspartate 37–tyrosine 38, and asparagine 90. 2 residues coordinate glycochenodeoxycholate: serine 145 and tyrosine 158. NAD(+) contacts are provided by residues tyrosine 158, lysine 162, and isoleucine 191–threonine 193. The active-site Proton acceptor is the tyrosine 158.

The protein belongs to the short-chain dehydrogenases/reductases (SDR) family. In terms of assembly, homotetramer.

The enzyme catalyses cholate + NAD(+) = 3alpha,12alpha-dihydroxy-7-oxo-5beta-cholanate + NADH + H(+). It catalyses the reaction chenodeoxycholate + NAD(+) = 7-oxolithocholate + NADH + H(+). The catalysed reaction is taurochenodeoxycholate + NAD(+) = 7-oxotaurolithocholate + NADH + H(+). It carries out the reaction glycochenodeoxycholate + NAD(+) = 7-oxoglycolithocholate + NADH + H(+). The enzyme catalyses taurocholate + NAD(+) = 7-oxo-taurodeoxycholate + NADH + H(+). It catalyses the reaction glycocholate + NAD(+) = 7-oxo-glycodeoxycholate + NADH + H(+). The catalysed reaction is an aromatic primary alcohol + NAD(+) = an aromatic aldehyde + NADH + H(+). It carries out the reaction benzyl alcohol + NAD(+) = benzaldehyde + NADH + H(+). The enzyme catalyses 4-cyanobenzyl alcohol + NAD(+) = 4-cyanobenzaldehyde + NADH + H(+). It catalyses the reaction 4-acetoxybenzyl alcohol + NAD(+) = 4-acetoxybenzaldehyde + NADH + H(+). The catalysed reaction is 4-(trifluoromethyl)benzyl alcohol + NAD(+) = 4-(trifluoromethyl)benzaldehyde + NADH + H(+). 7alpha-hydroxysteroid dehydrogenase involved in the metabolism of bile acids in the gut. Catalyzes the NAD(+)-dependent oxidation of the 7alpha-hydroxy group of 7alpha-hydroxysteroids, such as cholate, chenodeoxycholate, taurochenodeoxycholate, glycochenodeoxycholate, taurocholate and glycocholate, to the corresponding 7-oxosteroids. Since it is also able to catalyze the reduction of nonsteroidal carbonyl compounds such as various benzaldehyde analogs to their corresponding benzyl alcohols, this enzyme may also function in the detoxification of xenobiotics containing carbonyl groups in the large intestine. The sequence is that of 7alpha-hydroxysteroid dehydrogenase from Bacteroides fragilis (strain ATCC 25285 / DSM 2151 / CCUG 4856 / JCM 11019 / LMG 10263 / NCTC 9343 / Onslow / VPI 2553 / EN-2).